Reading from the N-terminus, the 136-residue chain is Peptide methionine sulfoxide reductase MsrB (136 aa).

The MsrB domain maps to 13-135 (ENDWRSKLTP…NSASLDFKDK (123 aa)). Positions 52, 55, 101, and 104 each coordinate Zn(2+). Cys-124 serves as the catalytic Nucleophile.

It belongs to the MsrB Met sulfoxide reductase family. Zn(2+) serves as cofactor.

It catalyses the reaction L-methionyl-[protein] + [thioredoxin]-disulfide + H2O = L-methionyl-(R)-S-oxide-[protein] + [thioredoxin]-dithiol. The protein is Peptide methionine sulfoxide reductase MsrB of Synechococcus sp. (strain RCC307).